Consider the following 183-residue polypeptide: Ribonuclease M5 (183 aa).

The Toprim domain maps to 6 to 90; the sequence is KEVIVVEGKD…AYISRVSGTK (85 aa). Mg(2+) is bound by residues Glu12, Asp59, and Asp61.

This sequence belongs to the ribonuclease M5 family. Requires Mg(2+) as cofactor.

The protein resides in the cytoplasm. It carries out the reaction Endonucleolytic cleavage of RNA, removing 21 and 42 nucleotides, respectively, from the 5'- and 3'-termini of a 5S-rRNA precursor.. Required for correct processing of both the 5' and 3' ends of 5S rRNA precursor. Cleaves both sides of a double-stranded region yielding mature 5S rRNA in one step. This chain is Ribonuclease M5, found in Fusobacterium nucleatum subsp. nucleatum (strain ATCC 25586 / DSM 15643 / BCRC 10681 / CIP 101130 / JCM 8532 / KCTC 2640 / LMG 13131 / VPI 4355).